The sequence spans 865 residues: Nitrogen regulatory protein nrfA (865 aa).

Disordered stretches follow at residues 1 to 75 (MEGI…DEMQ), 115 to 140 (RKER…PSGI), 177 to 227 (FDSP…QDQR), 557 to 605 (GSTD…RTAS), and 617 to 663 (LNGS…AGPT). A compositionally biased stretch (low complexity) spans 32–46 (DDFTFDSPFSSSGSS). 2 stretches are compositionally biased toward basic and acidic residues: residues 115 to 126 (RKEREQQEREQQ) and 180 to 189 (PAEHPSHPSA). Positions 582-592 (ASVSDVRNQNQ) are enriched in polar residues. A GATA-type zinc finger spans residues 665-689 (CTNCFTQTTPLWRRNPEGQPLCNAC). The tract at residues 713-854 (NRSSANTLAV…NHSIAGGQGA (142 aa)) is disordered. 2 stretches are compositionally biased toward polar residues: residues 715 to 724 (SSANTLAVGT) and 737 to 764 (IQHA…SNTL). Low complexity-rich tracts occupy residues 771 to 786 (PIAA…AGVA) and 830 to 844 (PLAP…ANPA).

The protein resides in the nucleus. Functionally, major nitrogen regulatory protein. This chain is Nitrogen regulatory protein nrfA (nrfA), found in Penicillium urticae.